The primary structure comprises 729 residues: Heterogeneous nuclear ribonucleoprotein M (729 aa).

Positions 1–13 (MAAGVEAAAEVAA) are enriched in low complexity. Residues 1–65 (MAAGVEAAAE…GGNRFEPYSN (65 aa)) are disordered. Position 2 is an N-acetylalanine (Ala-2). Lys-17 participates in a covalent cross-link: Glycyl lysine isopeptide (Lys-Gly) (interchain with G-Cter in SUMO2). Ser-29 bears the Phosphoserine mark. Residues Lys-37, Lys-68, and Lys-82 each participate in a glycyl lysine isopeptide (Lys-Gly) (interchain with G-Cter in SUMO2) cross-link. Residues 37–49 (KGEERPTQNEKRK) show a composition bias toward basic and acidic residues. RRM domains lie at 70–148 (YRAF…EDPD) and 203–280 (STVF…MDER). At Ser-85 the chain carries Phosphoserine. Glycyl lysine isopeptide (Lys-Gly) (interchain with G-Cter in SUMO2) cross-links involve residues Lys-87 and Lys-126. Residue Lys-133 is modified to N6-acetyllysine; alternate. Lys-133 is covalently cross-linked (Glycyl lysine isopeptide (Lys-Gly) (interchain with G-Cter in SUMO2); alternate). Glycyl lysine isopeptide (Lys-Gly) (interchain with G-Cter in SUMO2) cross-links involve residues Lys-142 and Lys-144. The residue at position 203 (Ser-203) is a Phosphoserine. Residue Lys-220 forms a Glycyl lysine isopeptide (Lys-Gly) (interchain with G-Cter in SUMO2) linkage. N6-acetyllysine; alternate is present on Lys-276. Residue Lys-276 forms a Glycyl lysine isopeptide (Lys-Gly) (interchain with G-Cter in SUMO2); alternate linkage. Residues Lys-284 and Lys-344 each participate in a glycyl lysine isopeptide (Lys-Gly) (interchain with G-Cter in SUMO2) cross-link. Phosphoserine is present on residues Ser-364 and Ser-376. Residues Lys-380 and Lys-387 each participate in a glycyl lysine isopeptide (Lys-Gly) (interchain with G-Cter in SUMO2) cross-link. Ser-396 is modified (phosphoserine). 4 repeat units span residues 399–404 (GIERMG), 406–411 (GIDRIS), 414–419 (GMERMG), and 425–430 (GMDRVG). The interval 399–607 (GIERMGPGID…ALGAGIERMG (209 aa)) is 27 X 6 AA repeats of [GEVSTPAN]-[ILMV]-[DE]-[RH]-[MLVI]-[GAV]. Ser-431 carries the phosphoserine modification. 3 repeat units span residues 432 to 437 (EIERMG), 439 to 444 (VMDRMG), and 445 to 450 (SVERMG). The residue at position 451 (Ser-451) is a Phosphoserine. 4 consecutive repeat copies span residues 452-457 (SIERMG), 460-465 (GLDHMA), 467-472 (SIERMG), and 474-479 (TMERIG). Residue Ser-467 is modified to Phosphoserine. Ser-480 carries the phosphoserine modification. 16 repeat units span residues 481–486 (GVERMG), 492–497 (GLERMA), 499–504 (PIDRVG), 506–511 (TIERMG), 513–518 (GVERMG), 520–525 (AIERMG), 527–532 (SMDRMV), 539–544 (SLERMG), 546–551 (VMDRMA), 553–558 (GLERMG), 561–566 (NLERMG), 567–571 (LERMG), 574–579 (SLERMG), 580–584 (LERMG), 587–592 (SLERMG), and 602–607 (GIERMG). The residue at position 495 (Arg-495) is an Omega-N-methylarginine. Ser-527 carries the phosphoserine modification. At Ser-574 the chain carries Phosphoserine. Residue Ser-587 is modified to Phosphoserine. Residues Ser-617, Ser-632, and Ser-636 each carry the phosphoserine modification. Lys-650 is covalently cross-linked (Glycyl lysine isopeptide (Lys-Gly) (interchain with G-Cter in SUMO2)). In terms of domain architecture, RRM 3 spans 652 to 728 (CQIFVRNLPF…REIDVRIDRN (77 aa)). A Phosphothreonine modification is found at Thr-664. A Glycyl lysine isopeptide (Lys-Gly) (interchain with G-Cter in SUMO2) cross-link involves residue Lys-666. Lys-671 carries the post-translational modification N6-acetyllysine. Residues Lys-684 and Lys-691 each participate in a glycyl lysine isopeptide (Lys-Gly) (interchain with G-Cter in SUMO2) cross-link. N6-acetyllysine; alternate is present on Lys-697. Lys-697 is covalently cross-linked (Glycyl lysine isopeptide (Lys-Gly) (interchain with G-Cter in SUMO2); alternate). Lys-697 is covalently cross-linked (Glycyl lysine isopeptide (Lys-Gly) (interchain with G-Cter in SUMO1); alternate). Ser-700 carries the post-translational modification Phosphoserine. A Glycyl lysine isopeptide (Lys-Gly) (interchain with G-Cter in SUMO2) cross-link involves residue Lys-715.

Identified in the spliceosome C complex. Interacts with PPIA/CYPA. In terms of processing, sumoylated.

It is found in the nucleus. Pre-mRNA binding protein in vivo, binds avidly to poly(G) and poly(U) RNA homopolymers in vitro. Involved in splicing. Acts as a receptor for carcinoembryonic antigen in Kupffer cells, may initiate a series of signaling events leading to tyrosine phosphorylation of proteins and induction of IL-1 alpha, IL-6, IL-10 and tumor necrosis factor alpha cytokines. The chain is Heterogeneous nuclear ribonucleoprotein M (Hnrnpm) from Mus musculus (Mouse).